The chain runs to 109 residues: Archaeosine synthase (109 aa).

Residue C21 is the Thioimide intermediate of the active site. Residue D28 is the Proton donor/acceptor of the active site. Residues D28, 43 to 46, and 62 to 63 contribute to the substrate site; these read LAIE and HE.

This sequence belongs to the archaeosine synthase type 2 family. As to quaternary structure, forms a symmetric tunnel-fold (T-fold) homodecamer of two head-to-head facing pentameric subunits, with 10 active sites at the intermonomer interfaces.

It carries out the reaction 7-cyano-7-carbaguanosine(15) in tRNA + NH4(+) = archaeosine(15) in tRNA. Its pathway is tRNA modification; archaeosine-tRNA biosynthesis. Functionally, is responsible for the final step in the biosynthesis of archaeosine, a modified nucleoside present in the dihydrouridine loop (D-loop) of archaeal tRNA. Catalyzes the conversion of 7-cyano-7-deazaguanine (preQ0)-modified tRNA to archaeosine-tRNA, transforming a nitrile group to a formamidine group. Can use neither glutamine nor asparagine as amino donor in vitro, is only able to utilize free ammonium. However, the enzyme might function in vivo with a partner that serves to generate ammonium. The chain is Archaeosine synthase from Pyrobaculum calidifontis (strain DSM 21063 / JCM 11548 / VA1).